Reading from the N-terminus, the 301-residue chain is Ribonuclease HIII (301 aa).

Residues 90 to 301 (TPHIGIDESG…LDAILGKVGK (212 aa)) enclose the RNase H type-2 domain. Asp-96, Glu-97, and Asp-198 together coordinate a divalent metal cation.

Belongs to the RNase HII family. RnhC subfamily. Requires Mn(2+) as cofactor. Mg(2+) is required as a cofactor.

Its subcellular location is the cytoplasm. It carries out the reaction Endonucleolytic cleavage to 5'-phosphomonoester.. In terms of biological role, endonuclease that specifically degrades the RNA of RNA-DNA hybrids. The protein is Ribonuclease HIII of Protochlamydia amoebophila (strain UWE25).